The chain runs to 65 residues: Photosystem II reaction center protein J (65 aa).

Residues 1 to 18 are compositionally biased toward basic and acidic residues; that stretch reads MSSKLKGPDGRLPDRLPD. A disordered region spans residues 1–21; it reads MSSKLKGPDGRLPDRLPDGRP. A helical membrane pass occupies residues 36–56; sequence LWLVATAGGIAVIFVLGIFFY.

It belongs to the PsbJ family. In terms of assembly, PSII is composed of 1 copy each of membrane proteins PsbA, PsbB, PsbC, PsbD, PsbE, PsbF, PsbH, PsbI, PsbJ, PsbK, PsbL, PsbM, PsbT, PsbX, PsbY, Psb30/Ycf12, peripheral proteins PsbO, CyanoQ (PsbQ), PsbU, PsbV and a large number of cofactors. It forms dimeric complexes.

The protein resides in the cellular thylakoid membrane. Its function is as follows. One of the components of the core complex of photosystem II (PSII). PSII is a light-driven water:plastoquinone oxidoreductase that uses light energy to abstract electrons from H(2)O, generating O(2) and a proton gradient subsequently used for ATP formation. It consists of a core antenna complex that captures photons, and an electron transfer chain that converts photonic excitation into a charge separation. This is Photosystem II reaction center protein J from Prochlorococcus marinus (strain SARG / CCMP1375 / SS120).